We begin with the raw amino-acid sequence, 122 residues long: MIQMQSQLEVADNSGAKRVQCIKVLGGSKRRTAGVGDVIVVSIKEAQPRGKVKKGDVHRAVIVRTAKDVRRADGSVIRFDSNAAVLVNKNEEPIGTRIFGPVVRELRGRGYMKIISLAPEVL.

The protein belongs to the universal ribosomal protein uL14 family. As to quaternary structure, part of the 50S ribosomal subunit. Forms a cluster with proteins L3 and L19. In the 70S ribosome, L14 and L19 interact and together make contacts with the 16S rRNA in bridges B5 and B8.

Functionally, binds to 23S rRNA. Forms part of two intersubunit bridges in the 70S ribosome. This is Large ribosomal subunit protein uL14 from Sphingopyxis alaskensis (strain DSM 13593 / LMG 18877 / RB2256) (Sphingomonas alaskensis).